Here is a 97-residue protein sequence, read N- to C-terminus: UPF0473 protein Exig_2070 (97 aa).

Belongs to the UPF0473 family.

The polypeptide is UPF0473 protein Exig_2070 (Exiguobacterium sibiricum (strain DSM 17290 / CCUG 55495 / CIP 109462 / JCM 13490 / 255-15)).